Consider the following 348-residue polypeptide: Erlin-1 (348 aa).

Over 1–7 (MNMTQAR) the chain is Cytoplasmic. Residues 8 to 28 (VLVAAVVGLVAVLLYASIHKI) traverse the membrane as a helical segment. Over 29–348 (EEGHLAVYYR…NLIQNKESTG (320 aa)) the chain is Lumenal. N108 is a glycosylation site (N-linked (GlcNAc...) asparagine). Position 269 is an N6-acetyllysine (K269). A compositionally biased stretch (basic and acidic residues) spans 321–333 (TGRESSHPSKEAL). The interval 321–348 (TGRESSHPSKEALEPSGENLIQNKESTG) is disordered. A compositionally biased stretch (polar residues) spans 339–348 (NLIQNKESTG).

This sequence belongs to the band 7/mec-2 family. As to quaternary structure, forms a heteromeric complex with ERLIN2. In complex with ERLIN2, interacts with RNF170. Interacts with AMFR and SYVN1. Post-translationally, deubiquitinated by USP25; leading to stabilization.

Its subcellular location is the endoplasmic reticulum membrane. Functionally, component of the ERLIN1/ERLIN2 complex which mediates the endoplasmic reticulum-associated degradation (ERAD) of inositol 1,4,5-trisphosphate receptors (IP3Rs). Involved in regulation of cellular cholesterol homeostasis by regulation the SREBP signaling pathway. Binds cholesterol and may promote ER retention of the SCAP-SREBF complex. The sequence is that of Erlin-1 from Pongo abelii (Sumatran orangutan).